A 2193-amino-acid polypeptide reads, in one-letter code: Genome polyprotein (2193 aa).

Residues 1 to 23 form a disordered region; that stretch reads MGSQVSTQRSGSHENSNSASEGS. Gly-2 carries N-myristoyl glycine; by host lipidation. At 2–1503 the chain is on the cytoplasmic side; that stretch reads GSQVSTQRSG…HLNRAVLVMQ (1502 aa). The tract at residues 566 to 588 is amphipathic alpha-helix; sequence GDPIADMIDQTVNNQVNRSLTAL. Residues His-883 and Asp-901 each act as for protease 2A activity in the active site. Zn(2+)-binding residues include Cys-918 and Cys-920. Cys-972 (for protease 2A activity) is an active-site residue. Residues Cys-978 and His-980 each coordinate Zn(2+). Residues 1112–1184 are membrane-binding; the sequence is SASWLKKFND…EQSAASQEDL (73 aa). The interval 1112-1250 is oligomerization; it reads SASWLKKFND…SPGTGKSLAT (139 aa). Positions 1133-1137 are RNA-binding; it reads SSKIS. The 159-residue stretch at 1216–1374 folds into the SF3 helicase domain; that stretch reads EKRMNNYMQF…YKTDLGRLDA (159 aa). An ATP-binding site is contributed by 1240 to 1247; the sequence is GSPGTGKS. Residues Cys-1381, Cys-1392, and Cys-1397 each coordinate Zn(2+). Residues 1381 to 1397 form a C4-type; degenerate zinc finger; sequence CTENNTANFKRCSPLVC. The RNA-binding stretch occupies residues 1424-1431; the sequence is EYNNRSAI. The tract at residues 1435 to 1440 is oligomerization; sequence IEALFQ. The stretch at 1504–1519 is an intramembrane region; sequence SIATVVAVVSLVYVIY. The Cytoplasmic portion of the chain corresponds to 1520 to 2193; that stretch reads KLFAGFQGAY…NLRRNWLELF (674 aa). Tyr-1529 bears the O-(5'-phospho-RNA)-tyrosine mark. The 179-residue stretch at 1549–1727 folds into the Peptidase C3 domain; sequence GPSLDFALSL…FCAGLKRGYF (179 aa). Residues His-1588, Glu-1619, and Cys-1695 each act as for protease 3C activity in the active site. The RdRp catalytic domain occupies 1958 to 2074; sequence GSLFAFDYSG…SYPFPIDCSE (117 aa). Mg(2+)-binding residues include Asp-1964 and Asp-2060.

The protein belongs to the picornaviruses polyprotein family. Interacts with capsid protein VP1 and capsid protein VP3 to form heterotrimeric protomers. As to quaternary structure, interacts with capsid protein VP0, and capsid protein VP3 to form heterotrimeric protomers. Five protomers subsequently associate to form pentamers which serve as building blocks for the capsid. Interacts with capsid protein VP2, capsid protein VP3 and capsid protein VP4 following cleavage of capsid protein VP0. In terms of assembly, interacts with capsid protein VP1 and capsid protein VP3 in the mature capsid. Interacts with capsid protein VP0 and capsid protein VP1 to form heterotrimeric protomers. Five protomers subsequently associate to form pentamers which serve as building blocks for the capsid. Interacts with capsid protein VP4 in the mature capsid. Interacts with protein 2C; this interaction may be important for virion morphogenesis. As to quaternary structure, interacts with capsid protein VP1 and capsid protein VP3. In terms of assembly, homodimer. Homohexamer; forms a hexameric ring structure with 6-fold symmetry characteristic of AAA+ ATPases. Interacts (via N-terminus) with host RTN3 (via reticulon domain); this interaction is important for viral replication. Interacts with capsid protein VP3; this interaction may be important for virion morphogenesis. As to quaternary structure, interacts with protein 3CD. In terms of assembly, homodimer. Interacts with host GBF1. Interacts (via GOLD domain) with host ACBD3 (via GOLD domain); this interaction allows the formation of a viral protein 3A/ACBD3 heterotetramer with a 2:2 stoichiometry, which will stimulate the recruitment of host PI4KB in order to synthesize PI4P at the viral RNA replication sites. Interacts with RNA-directed RNA polymerase. As to quaternary structure, interacts with host IFIH1/MDA5; this interaction inhibits host IFIH1. In terms of assembly, protein 3CD: Interacts with protein 3AB and with RNA-directed RNA polymerase. Interacts with Viral protein genome-linked and with protein 3CD. Requires Mg(2+) as cofactor. Specific enzymatic cleavages in vivo by the viral proteases yield processing intermediates and the mature proteins. In terms of processing, myristoylation is required for the formation of pentamers during virus assembly. Further assembly of 12 pentamers and a molecule of genomic RNA generates the provirion. Post-translationally, during virion maturation, immature virions are rendered infectious following cleavage of VP0 into VP4 and VP2. This maturation seems to be an autocatalytic event triggered by the presence of RNA in the capsid and it is followed by a conformational change infectious virion. Myristoylation is required during RNA encapsidation and formation of the mature virus particle. In terms of processing, VPg is uridylylated by the polymerase into VPg-pUpU. This acts as a nucleotide-peptide primer for the genomic RNA replication.

The protein resides in the virion. Its subcellular location is the host cytoplasm. It is found in the host cytoplasmic vesicle membrane. The protein localises to the host nucleus. The enzyme catalyses a ribonucleoside 5'-triphosphate + H2O = a ribonucleoside 5'-diphosphate + phosphate + H(+). The catalysed reaction is Selective cleavage of Tyr-|-Gly bond in the picornavirus polyprotein.. It catalyses the reaction RNA(n) + a ribonucleoside 5'-triphosphate = RNA(n+1) + diphosphate. It carries out the reaction Selective cleavage of Gln-|-Gly bond in the poliovirus polyprotein. In other picornavirus reactions Glu may be substituted for Gln, and Ser or Thr for Gly.. With respect to regulation, replication or transcription is subject to high level of random mutations by the nucleotide analog ribavirin. Functionally, forms an icosahedral capsid of pseudo T=3 symmetry with capsid proteins VP2 and VP3. The capsid is 300 Angstroms in diameter, composed of 60 copies of each capsid protein and enclosing the viral positive strand RNA genome. Capsid protein VP1 mainly forms the vertices of the capsid. Capsid protein VP1 interacts with host cell receptor to provide virion attachment to target host cells. This attachment induces virion internalization. After binding to its receptor, the capsid undergoes conformational changes. Capsid protein VP1 N-terminus (that contains an amphipathic alpha-helix) and capsid protein VP4 are externalized. Together, they shape a pore in the host membrane through which viral genome is translocated to host cell cytoplasm. In terms of biological role, forms an icosahedral capsid of pseudo T=3 symmetry with capsid proteins VP2 and VP3. The capsid is 300 Angstroms in diameter, composed of 60 copies of each capsid protein and enclosing the viral positive strand RNA genome. Lies on the inner surface of the capsid shell. After binding to the host receptor, the capsid undergoes conformational changes. Capsid protein VP4 is released, Capsid protein VP1 N-terminus is externalized, and together, they shape a pore in the host membrane through which the viral genome is translocated into the host cell cytoplasm. Its function is as follows. Component of immature procapsids, which is cleaved into capsid proteins VP4 and VP2 after maturation. Allows the capsid to remain inactive before the maturation step. Functionally, cysteine protease that cleaves viral polyprotein and specific host proteins. It is responsible for the autocatalytic cleavage between the P1 and P2 regions, which is the first cleavage occurring in the polyprotein. Also cleaves the host translation initiation factor EIF4G1, in order to shut down the capped cellular mRNA translation. Inhibits the host nucleus-cytoplasm protein and RNA trafficking by cleaving host members of the nuclear pores. Counteracts stress granule formation probably by antagonizing its assembly or promoting its dissassembly. Cleaves and inhibits host IFIH1/MDA5, thereby inhibiting the type-I IFN production and the establishment of the antiviral state. Cleaves and inhibits host MAVS, thereby inhibiting the type-I IFN production and the establishment of the antiviral state. In terms of biological role, plays an essential role in the virus replication cycle by acting as a viroporin. Creates a pore in the host endoplasmic reticulum and as a consequence releases Ca2+ in the cytoplasm of infected cell. In turn, high levels of cytoplasmic calcium may trigger membrane trafficking and transport of viral ER-associated proteins to viroplasms, sites of viral genome replication. Induces and associates with structural rearrangements of intracellular membranes. Displays RNA-binding, nucleotide binding and NTPase activities. May play a role in virion morphogenesis and viral RNA encapsidation by interacting with the capsid protein VP3. Its function is as follows. Localizes the viral replication complex to the surface of membranous vesicles. Together with protein 3CD binds the Cis-Active RNA Element (CRE) which is involved in RNA synthesis initiation. Acts as a cofactor to stimulate the activity of 3D polymerase, maybe through a nucleid acid chaperone activity. Functionally, localizes the viral replication complex to the surface of membranous vesicles. It inhibits host cell endoplasmic reticulum-to-Golgi apparatus transport and causes the disassembly of the Golgi complex, possibly through GBF1 interaction. This would result in depletion of MHC, trail receptors and IFN receptors at the host cell surface. Plays an essential role in viral RNA replication by recruiting ACBD3 and PI4KB at the viral replication sites, thereby allowing the formation of the rearranged membranous structures where viral replication takes place. In terms of biological role, acts as a primer for viral RNA replication and remains covalently bound to viral genomic RNA. VPg is uridylylated prior to priming replication into VPg-pUpU. The oriI viral genomic sequence may act as a template for this. The VPg-pUpU is then used as primer on the genomic RNA poly(A) by the RNA-dependent RNA polymerase to replicate the viral genome. During genome replication, the VPg-RNA linkage is removed by the host TDP2, thereby accelerating replication. During the late stage of the replication cycle, host TDP2 is excluded from sites of viral RNA synthesis and encapsidation, allowing for the generation of progeny virions. Involved in the viral replication complex and viral polypeptide maturation. It exhibits protease activity with a specificity and catalytic efficiency that is different from protease 3C. Protein 3CD lacks polymerase activity. Protein 3CD binds to the 5'UTR of the viral genome. Its function is as follows. Major viral protease that mediates proteolytic processing of the polyprotein. Cleaves host EIF5B, contributing to host translation shutoff. Also cleaves host PABPC1, contributing to host translation shutoff. Binds and inhibits host IFIH1/MDA5, thereby inhibiting the type-I IFN production and the establishment of the antiviral state. Cleaves host MAP3K7/TAK1, resulting in inhibition of TRAF6-triggered NF-kappa-B induction. Cleaves host NLRP1, triggers host N-glycine-mediated degradation of the autoinhibitory NLRP1 N-terminal fragment. Functionally, replicates the viral genomic RNA on the surface of intracellular membranes. May form linear arrays of subunits that propagate along a strong head-to-tail interaction called interface-I. Covalently attaches UMP to a tyrosine of VPg, which is used to prime RNA synthesis. The positive stranded RNA genome is first replicated at virus induced membranous vesicles, creating a dsRNA genomic replication form. This dsRNA is then used as template to synthesize positive stranded RNA genomes. ss(+)RNA genomes are either translated, replicated or encapsidated. In Homo sapiens (Human), this protein is Genome polyprotein.